Consider the following 126-residue polypeptide: Ribosome-binding factor A (126 aa).

This sequence belongs to the RbfA family. In terms of assembly, monomer. Binds 30S ribosomal subunits, but not 50S ribosomal subunits or 70S ribosomes.

The protein localises to the cytoplasm. Its function is as follows. One of several proteins that assist in the late maturation steps of the functional core of the 30S ribosomal subunit. Associates with free 30S ribosomal subunits (but not with 30S subunits that are part of 70S ribosomes or polysomes). Required for efficient processing of 16S rRNA. May interact with the 5'-terminal helix region of 16S rRNA. The polypeptide is Ribosome-binding factor A (Geobacillus sp. (strain WCH70)).